The chain runs to 254 residues: Putative biopolymer transport protein ExbB-like 1 (254 aa).

A run of 3 helical transmembrane segments spans residues 39-59 (GGVV…TAFE), 141-161 (LETI…TGLI), and 185-205 (IGEA…ALLV).

This sequence belongs to the ExbB/TolQ family.

It localises to the cell inner membrane. Its function is as follows. Involved in the TonB-dependent energy-dependent transport of various receptor-bound substrates. Protects ExbD from proteolytic degradation and functionally stabilizes TonB. The protein is Putative biopolymer transport protein ExbB-like 1 of Synechocystis sp. (strain ATCC 27184 / PCC 6803 / Kazusa).